We begin with the raw amino-acid sequence, 103 residues long: Cell division protein FtsB (103 aa).

At 1–3 the chain is on the cytoplasmic side; that stretch reads MGK. Residues 4–21 form a helical membrane-spanning segment; the sequence is LTLLLLALLVWLQYSLWF. Residues 22–103 lie on the Periplasmic side of the membrane; the sequence is GKNGIHDYSR…RAQTAGQNNR (82 aa). The stretch at 33–62 forms a coiled coil; the sequence is NDDVVAQQATNAKLKARNDQLFAEIDDLNG.

This sequence belongs to the FtsB family. In terms of assembly, part of a complex composed of FtsB, FtsL and FtsQ.

It localises to the cell inner membrane. Functionally, essential cell division protein. May link together the upstream cell division proteins, which are predominantly cytoplasmic, with the downstream cell division proteins, which are predominantly periplasmic. This chain is Cell division protein FtsB, found in Salmonella arizonae (strain ATCC BAA-731 / CDC346-86 / RSK2980).